The sequence spans 312 residues: Olfactory receptor 2C1 (312 aa).

The Extracellular segment spans residues 1 to 24; sequence MEVDSNSSSGSFILMGVSDHPHLE. An N-linked (GlcNAc...) asparagine glycan is attached at N6. Residues 25-48 form a helical membrane-spanning segment; it reads IIFFAVILASYLLTLVGNLTIILL. The Cytoplasmic segment spans residues 49–57; sequence SRLDARLHT. The chain crosses the membrane as a helical span at residues 58-79; the sequence is PMYFFLSNLSSLDLAFTTSSVP. Topologically, residues 80–100 are extracellular; it reads QMLKNLWGPDKTISYGGCVTQ. The cysteines at positions 97 and 189 are disulfide-linked. A helical transmembrane segment spans residues 101–120; sequence LYVFLWLGATECILLVVMAF. Topologically, residues 121 to 139 are cytoplasmic; that stretch reads DRYVAVCRPLHYMTVMNPR. A helical membrane pass occupies residues 140-160; that stretch reads LCWGLAAISWLGGLGNSVIQS. Over 161-200 the chain is Extracellular; the sequence is TFTLQLPFCGHRKVDNFLCEVPAMIKLACGDTSLNEAVLN. A helical transmembrane segment spans residues 201–222; it reads GVCTFFTVVPVSVILVSYCFIA. Topologically, residues 223–236 are cytoplasmic; the sequence is QAVMKIRSVEGRRK. The helical transmembrane segment at 237–261 threads the bilayer; the sequence is AFNTCVSHLVVVFLFYGSAIYGYLL. The Extracellular segment spans residues 262–272; the sequence is PAKSSNQSQGK. The helical transmembrane segment at 273-292 threads the bilayer; it reads FISLFYSVVTPMVNPLIYTL. Topologically, residues 293–312 are cytoplasmic; the sequence is RNKEVKGALGRLLGKGRGAS.

This sequence belongs to the G-protein coupled receptor 1 family. Olfactory epithelium. Present in various subcellular compartments of the olfactory sensory neurons, particularly in the axonal processes and neve terminals.

The protein resides in the cell membrane. Functionally, olfactory receptor that is activated by the binding of organosulfur odorants with thioether groups such as (methylthio)methanetiol (MTMT). Also binds odorants acetophenone and benzaldehyde. The activity of this receptor is mediated by G proteins which activate adenylyl cyclase. May be involved in the molecular processes underlying fasciculation and targeting of olfactory axons. This chain is Olfactory receptor 2C1, found in Mus musculus (Mouse).